The following is a 311-amino-acid chain: Terpentetriene synthase (311 aa).

The DDXXD motif motif lies at 77–81 (DDRWD).

This sequence belongs to the terpene synthase family. In terms of assembly, homodimer. Requires Mg(2+) as cofactor.

It carries out the reaction terpentedienyl diphosphate = terpentetriene + diphosphate. It functions in the pathway antibiotic biosynthesis. Its function is as follows. Involved in the production of the isoprenoid antibiotic terpentecin. Converts terpentedienol diphosphate (TDP) into terpentetriene (TTE). Can also accept geranylgeranyl diphosphate (GGDP) and farnesyl diphosphate (FDP) as substrates. This Kitasatospora griseola (Streptomyces griseolosporeus) protein is Terpentetriene synthase (cyc2).